The primary structure comprises 484 residues: Probable glycine dehydrogenase (decarboxylating) subunit 2 (484 aa).

Residue K264 is modified to N6-(pyridoxal phosphate)lysine.

Belongs to the GcvP family. C-terminal subunit subfamily. The glycine cleavage system is composed of four proteins: P, T, L and H. In this organism, the P 'protein' is a heterodimer of two subunits. It depends on pyridoxal 5'-phosphate as a cofactor.

It carries out the reaction N(6)-[(R)-lipoyl]-L-lysyl-[glycine-cleavage complex H protein] + glycine + H(+) = N(6)-[(R)-S(8)-aminomethyldihydrolipoyl]-L-lysyl-[glycine-cleavage complex H protein] + CO2. In terms of biological role, the glycine cleavage system catalyzes the degradation of glycine. The P protein binds the alpha-amino group of glycine through its pyridoxal phosphate cofactor; CO(2) is released and the remaining methylamine moiety is then transferred to the lipoamide cofactor of the H protein. This is Probable glycine dehydrogenase (decarboxylating) subunit 2 from Legionella pneumophila (strain Lens).